A 368-amino-acid polypeptide reads, in one-letter code: ATP-dependent (S)-NAD(P)H-hydrate dehydratase (368 aa).

One can recognise a YjeF C-terminal domain in the interval 3-359; that stretch reads SPSKKLLANV…DEVHGSFLDL (357 aa). Residues Gly-120 and 173 to 179 contribute to the (6S)-NADPHX site; that span reads NVVEFAR. ATP contacts are provided by residues 217 to 221 and 236 to 245; these read KGPHD and GGLKRSGGQG. Asp-246 is a (6S)-NADPHX binding site.

It belongs to the NnrD/CARKD family. It depends on Mg(2+) as a cofactor.

The protein resides in the cytoplasm. It carries out the reaction (6S)-NADHX + ATP = ADP + phosphate + NADH + H(+). It catalyses the reaction (6S)-NADPHX + ATP = ADP + phosphate + NADPH + H(+). Functionally, catalyzes the dehydration of the S-form of NAD(P)HX at the expense of ATP, which is converted to ADP. Together with NAD(P)HX epimerase, which catalyzes the epimerization of the S- and R-forms, the enzyme allows the repair of both epimers of NAD(P)HX, a damaged form of NAD(P)H that is a result of enzymatic or heat-dependent hydration. The chain is ATP-dependent (S)-NAD(P)H-hydrate dehydratase from Ajellomyces capsulatus (strain G186AR / H82 / ATCC MYA-2454 / RMSCC 2432) (Darling's disease fungus).